A 232-amino-acid chain; its full sequence is Rho-related GTP-binding protein Rho6 (232 aa).

GTP contacts are provided by residues 23-28 (QCGKTA), 38-45 (YPETYVPT), 67-71 (DTSGS), 125-128 (CKTD), and 169-170 (AF). The Effector region motif lies at 42 to 50 (YVPTVFENY). Residue Cys-229 is modified to Cysteine methyl ester. Residue Cys-229 is the site of S-geranylgeranyl cysteine attachment. Positions 230–232 (SIM) are cleaved as a propeptide — removed in mature form.

This sequence belongs to the small GTPase superfamily. Rho family. As to quaternary structure, binds GRB7 and PLXNB1. Interacts with UBXD5. Interacts with PLXNA2. Mostly expressed in brain and liver.

The protein localises to the cell membrane. It localises to the cytoplasm. It is found in the cytoskeleton. Lacks intrinsic GTPase activity. Has a low affinity for GDP, and constitutively binds GTP. Controls rearrangements of the actin cytoskeleton. Induces the Rac-dependent neuritic process formation in part by disruption of the cortical actin filaments. Causes the formation of many neuritic processes from the cell body with disruption of the cortical actin filaments. This is Rho-related GTP-binding protein Rho6 (RND1) from Homo sapiens (Human).